We begin with the raw amino-acid sequence, 979 residues long: Probable serine/threonine-protein kinase iksA (979 aa).

10 N-linked (GlcNAc...) asparagine glycosylation sites follow: N32, N110, N120, N121, N147, N155, N161, N220, N231, and N243. Positions 207–245 are disordered; the sequence is SKSGVNNNNNNNNNDSTTTNNNNNNNTTPPQQQQQQNSS. Over residues 212-244 the composition is skewed to low complexity; it reads NNNNNNNNNDSTTTNNNNNNNTTPPQQQQQQNS. The region spanning 261–568 is the Protein kinase domain; that stretch reads FKEDIKIGSG…ISQILSTHFI (308 aa). Residues 267-275 and K293 contribute to the ATP site; that span reads IGSGGFGSV. Residue D397 is the Proton acceptor of the active site. N-linked (GlcNAc...) asparagine glycans are attached at residues N592, N597, N615, N645, N646, N663, and N699. Residues 593-602 are compositionally biased toward polar residues; the sequence is TSVHNTTAST. The disordered stretch occupies residues 593–666; the sequence is TSVHNTTAST…LGNNNNNNTN (74 aa). Over residues 610-666 the composition is skewed to low complexity; sequence SISTTNSTTSSSSSTATSSSLSSTTIATTSSSNAINNTTATTTTNSNLGNNNNNNTN. The segment covering 713 to 727 has biased composition (acidic residues); the sequence is NDDIIIDDDDDDDDS. The tract at residues 713–793 is disordered; the sequence is NDDIIIDDDD…GNNGIRKALP (81 aa). Composition is skewed to low complexity over residues 728–737 and 753–773; these read TNNNDTNNTD and NNKKSSYSRSSSIRSPSSSNK. Residues N731 and N734 are each glycosylated (N-linked (GlcNAc...) asparagine). A helical membrane pass occupies residues 846–866; the sequence is FPSPILLYPLLLLSLIPILVV. N-linked (GlcNAc...) asparagine glycans are attached at residues N870 and N894. 2 helical membrane-spanning segments follow: residues 912-932 and 956-976; these read INTIISIIRFIYYFVISVLLP and FPLLSLFKNLTLLIINLIFIF.

The protein belongs to the protein kinase superfamily. Ser/Thr protein kinase family.

It localises to the membrane. It carries out the reaction L-seryl-[protein] + ATP = O-phospho-L-seryl-[protein] + ADP + H(+). It catalyses the reaction L-threonyl-[protein] + ATP = O-phospho-L-threonyl-[protein] + ADP + H(+). This chain is Probable serine/threonine-protein kinase iksA (iksA), found in Dictyostelium discoideum (Social amoeba).